A 142-amino-acid polypeptide reads, in one-letter code: Centromere protein S (142 aa).

The disordered stretch occupies residues 107–142 (LKGKAKKKRKPEDESRSSRESMAEELDGAEELQSES). Basic and acidic residues predominate over residues 116-128 (KPEDESRSSRESM). The segment covering 129–142 (AEELDGAEELQSES) has biased composition (acidic residues).

This sequence belongs to the TAF9 family. CENP-S/MHF1 subfamily. In terms of assembly, heterodimer with CENPX, sometimes called MHF; this interaction stabilizes both partners. MHF heterodimers can assemble to form tetrameric structures. MHF also coassemble with CENPT-CENPW heterodimers at centromeres to form the tetrameric CENP-T-W-S-X complex. Forms a discrete complex with FANCM and CENPX, called FANCM-MHF; this interaction, probably mediated by direct binding between CENPS and FANCM, leads to synergistic activation of double-stranded DNA binding and strongly stimulates FANCM-mediated DNA remodeling. Recruited by FANCM to the Fanconi anemia (FA) core complex, which consists of CENPS, CENPX, FANCA, FANCB, FANCC, FANCE, FANCF, FANCG, FANCL, FANCM, FAAP24 and FAAP100. The FA core complex associates with Bloom syndrome (BLM) complex, which consists of at least BLM, DNA topoisomerase 3-alpha (TOP3A), RMI1/BLAP75, RPA1/RPA70 and RPA2/RPA32. The super complex between FA and BLM is called BRAFT. Component of the CENPA-CAD complex, composed of CENPI, CENPK, CENPL, CENPO, CENPP, CENPQ, CENPR and CENPS. The CENPA-CAD complex is probably recruited on centromeres by the CENPA-NAC complex, at least composed of CENPA, CENPC, CENPH, CENPM, CENPN, CENPT and CENPU.

It is found in the nucleus. The protein resides in the chromosome. Its subcellular location is the centromere. It localises to the kinetochore. Functionally, DNA-binding component of the Fanconi anemia (FA) core complex. Required for the normal activation of the FA pathway, leading to monoubiquitination of the FANCI-FANCD2 complex in response to DNA damage, cellular resistance to DNA cross-linking drugs, and prevention of chromosomal breakage. In complex with CENPX (MHF heterodimer), crucial cofactor for FANCM in both binding and ATP-dependent remodeling of DNA. Stabilizes FANCM. In complex with CENPX and FANCM (but not other FANC proteins), rapidly recruited to blocked forks and promotes gene conversion at blocked replication forks. In complex with CENPT, CENPW and CENPX (CENP-T-W-S-X heterotetramer), involved in the formation of a functional kinetochore outer plate, which is essential for kinetochore-microtubule attachment and faithful mitotic progression. As a component of MHF and CENP-T-W-S-X complexes, binds DNA and bends it to form a nucleosome-like structure. DNA-binding function is fulfilled in the presence of CENPX, with the following preference for DNA substates: Holliday junction &gt; double-stranded &gt; splay arm &gt; single-stranded. Does not bind DNA on its own. In Mus musculus (Mouse), this protein is Centromere protein S (Cenps).